Reading from the N-terminus, the 304-residue chain is Protein PagO (304 aa).

10 helical membrane-spanning segments follow: residues 4–24 (VSISILFMLVSLTWGTTWLAM), 34–54 (VFATGMRFMFAAPFLIIIAWL), 67–87 (LFQFVICIFYFCIPFSLMIYG), 95–115 (LAAIIFANMPVAVLIASVLFL), 119–139 (AKLMQIAGLTIAITALTGILL), 150–170 (WQGITALISAVLIHAIIYTQC), 180–200 (ITFNALPCLLAGLILSATGWF), 214–234 (ILATLYLGAFAGVFGILCYFA), 246–266 (LVFLIFPLIAVSLEDYIYGYA), and 267–287 (ISTHSMLLIIPLVIGIFLTLV). EamA domains follow at residues 15–139 (LTWG…GILL) and 161–287 (LIHA…LTLV).

This sequence belongs to the EamA transporter family.

The protein resides in the cell membrane. The sequence is that of Protein PagO (pagO) from Salmonella typhimurium (strain LT2 / SGSC1412 / ATCC 700720).